A 129-amino-acid polypeptide reads, in one-letter code: uncharacterized protein (129 aa).

Positions 23–101 (KASTSSESCQ…TAATRTTSKK (79 aa)) are disordered. Composition is skewed to basic and acidic residues over residues 31-40 (CQRRGVRDDT) and 67-80 (EGDRGPPRRPEKEP).

This is an uncharacterized protein from Ictaluridae (bullhead catfishes).